Consider the following 408-residue polypeptide: UDP-glucose 4-epimerase 2 (408 aa).

13 to 44 (TVLVTGGAGYIGSHAVLQLLLAGFRAVVVDNL) contributes to the NAD(+) binding site. Serine 138 lines the substrate pocket. Tyrosine 162 (proton acceptor) is an active-site residue. A disordered region spans residues 369–408 (GSPKQNGHCTNGFSESTRHNGHNGYGLVDSAKHNGNGHFH). The span at 370 to 383 (SPKQNGHCTNGFSE) shows a compositional bias: polar residues.

It belongs to the NAD(P)-dependent epimerase/dehydratase family. It depends on NAD(+) as a cofactor.

It catalyses the reaction UDP-alpha-D-glucose = UDP-alpha-D-galactose. It participates in carbohydrate metabolism; galactose metabolism. In terms of biological role, catalyzes the interconversion between UDP-glucose and UDP-galactose. The protein is UDP-glucose 4-epimerase 2 (UGE-2) of Oryza sativa subsp. japonica (Rice).